Here is a 738-residue protein sequence, read N- to C-terminus: NADH dehydrogenase [ubiquinone] iron-sulfur protein 1, mitochondrial (738 aa).

The N-terminal 27 residues, 1 to 27, are a transit peptide targeting the mitochondrion; it reads MGLGLLASRALRSSRIIRNSTRTIVST. The 2Fe-2S ferredoxin-type domain maps to 66–144; the sequence is DVIEVFVDGY…GMKIKTDTPI (79 aa). 4 residues coordinate [2Fe-2S] cluster: Cys100, Cys111, Cys114, and Cys128. Residues 144–183 enclose the 4Fe-4S His(Cys)3-ligated-type domain; it reads IAKKAREGVMEFLLMNHPLDCPICDQGGECDLQDQSMAFG. 8 residues coordinate [4Fe-4S] cluster: His160, Cys164, Cys167, Cys173, Cys212, Cys215, Cys218, and Cys262. The region spanning 281–337 is the 4Fe-4S Mo/W bis-MGD-type domain; the sequence is LKGTESIDVTDAVGSNIRIDSRGPEVMRVVPRLNEDINEEWISDKTRFFYDGLKRQR.

The protein belongs to the complex I 75 kDa subunit family. In terms of assembly, complex I is composed of about 45 different subunits. This is a component of the iron-sulfur (IP) fragment of the enzyme. [2Fe-2S] cluster serves as cofactor. Requires [4Fe-4S] cluster as cofactor.

Its subcellular location is the mitochondrion inner membrane. The enzyme catalyses a ubiquinone + NADH + 5 H(+)(in) = a ubiquinol + NAD(+) + 4 H(+)(out). Its function is as follows. Core subunit of the mitochondrial membrane respiratory chain NADH dehydrogenase (Complex I) that is believed to belong to the minimal assembly required for catalysis. Complex I functions in the transfer of electrons from NADH to the respiratory chain. The immediate electron acceptor for the enzyme is believed to be ubiquinone. This is the largest subunit of complex I and it is a component of the iron-sulfur (IP) fragment of the enzyme. It may form part of the active site crevice where NADH is oxidized. This is NADH dehydrogenase [ubiquinone] iron-sulfur protein 1, mitochondrial from Solanum tuberosum (Potato).